We begin with the raw amino-acid sequence, 642 residues long: MPVITLPDGSQRQFAHPVSPLDVARDIGPGLAKACIAGRVNGKLVDAVDVIEHDAQIAIITAKDEAGLEIIRHSCAHLLGHAIKQLWPQTKMAIGPVIDKGFYYDLDLDHTLTQDDLDLLEKRMHELAEKDYDVIKEKVSWQQARDAFVARGEDYKVAILDENIRRDDRPGLYHHEEYVDMCRGPHVPNMRFCHHFTLQKTSGAYWRGDSKNKMLLRIYGTAWGDKKQLNTYLQHLEEAAKRDHRKIGKQLDLYHMQEEAPGMVFWHNDGWTLFRELETFVRMKLKAYQYQEVKGPFMMDRVLWEKTGHWDNYAEHMFTTSSENREYCIKPMNCPGHVQIFNQGLKSYRDLPLRMAEFGSCHRNEPSGSLHGLMRVRGFTQDDAHIFCTEDQVRDEVNNCIKMVYDMYGTFGFEKILVKLSTRPEKRIGSNDVWGRAEQDLAAALTENGIAFEYQPGEGAFYGPKIEFTLLDCLDRAWQCGTVQLDFSLPGRLNASYVGENNERVVPVMIHRAILGSMERFIGILTEEYAGFYPTWLVPTQVVVMNITDNQSEYVAKLTEKLSAAGIRVKADLRNEKIGFKIREHTLRRVPYMLVCGDKEVEACKVAVRTRRGKDLGSIDVNEIITKLQHEIRSRNLHQLEE.

Positions 1 to 61 (MPVITLPDGS…EHDAQIAIIT (61 aa)) constitute a TGS domain. Residues 243 to 534 (DHRKIGKQLD…LTEEYAGFYP (292 aa)) form a catalytic region. Residues cysteine 334, histidine 385, and histidine 511 each coordinate Zn(2+).

Belongs to the class-II aminoacyl-tRNA synthetase family. In terms of assembly, homodimer. The cofactor is Zn(2+).

It is found in the cytoplasm. The enzyme catalyses tRNA(Thr) + L-threonine + ATP = L-threonyl-tRNA(Thr) + AMP + diphosphate + H(+). Its function is as follows. Catalyzes the attachment of threonine to tRNA(Thr) in a two-step reaction: L-threonine is first activated by ATP to form Thr-AMP and then transferred to the acceptor end of tRNA(Thr). Also edits incorrectly charged L-seryl-tRNA(Thr). The protein is Threonine--tRNA ligase of Sodalis glossinidius (strain morsitans).